A 437-amino-acid polypeptide reads, in one-letter code: MTHYHFVGIKGAGMSSLAQIMHDLGNEVQGSDIKNYVFTEVALKNNGIKILPFDANNIQSDMVVVQGNAFPDTHEEVVKAHELKLEVIRYHDFLGHIINQYTSVAVTGAHGKTSTTGLLSHVMNGDKKTSFLIGDGTGLGIPASDYFAFEACEYRRHFLSYHPDYAIMTNIDFDHPDYFKDVDDVFNAFQEMAHNVKKAIIAWGDDTHLRKIEADVPVYYYGFSNKDDVYADNLEISEKGTKFDVYFKGEYFDTFLSPQFGDHNILNALSVITISYLESLNIDNIKEALETFGGVKRRFNETKVGNQVLVDDYAHHPREISATIETARKKYPNKDVIAVFQPHTFSRTQAFLGEFAECLSLADKTFLCEIFGSIRENSGNLTIQDLVQRIDGATLIDEESVNALEQYSDAVILFMGAGDIQKIQRAYMEKIGVTSPF.

Glycine 108–serine 114 provides a ligand contact to ATP.

Belongs to the MurCDEF family.

It is found in the cytoplasm. It catalyses the reaction UDP-N-acetyl-alpha-D-muramate + L-alanine + ATP = UDP-N-acetyl-alpha-D-muramoyl-L-alanine + ADP + phosphate + H(+). It functions in the pathway cell wall biogenesis; peptidoglycan biosynthesis. Cell wall formation. This Staphylococcus saprophyticus subsp. saprophyticus (strain ATCC 15305 / DSM 20229 / NCIMB 8711 / NCTC 7292 / S-41) protein is UDP-N-acetylmuramate--L-alanine ligase.